A 469-amino-acid chain; its full sequence is Regulator of G-protein signaling 7 (469 aa).

One can recognise a DEP domain in the interval 37–112 (EKNGIPIRTV…DDGTFYRFQT (76 aa)). S229 and S241 each carry phosphoserine. Residues 235 to 256 (NDIRSHSPTHTPTPETKPPTED) are disordered. At T243 the chain carries Phosphothreonine. The G protein gamma domain occupies 255–316 (EDELQQQIKY…LSDDTTFWEL (62 aa)). The RGS domain maps to 333–448 (GMDEALKDPV…IRSSAYQELL (116 aa)). Residue S434 is modified to Phosphoserine.

As to quaternary structure, interacts with GNB5, forming the RGS7-GNB5 complex. Interacts with GPR158; promotes the GTPase activator activity of the RGS7-GNB5 complex in absence of glycine, in contrast GTPase activator activity of the RGS7-GNB5 complex is inhibited in presence of glycine. Interacts with GPR179. Interacts with PKD1; this prevents rapid proteasomal degradation. Interacts with RGS7BP, leading to regulate the subcellular location of the heterodimer formed with GNB5. Interacts (phosphorylated form) with 14-3-3 protein YWHAQ. Interacts with SNAPIN. Interacts with GNAI1. Interacts with GNAO1, GNAI3 and GNAZ. In terms of processing, palmitoylated. Ubiquitinated, leading to rapid proteasomal degradation. Post-translationally, phosphorylation and subsequent interaction with 14-3-3 proteins inhibits GAP activity. Detected in retina (at protein level).

It is found in the cytoplasm. The protein resides in the cytosol. Its subcellular location is the cell membrane. The protein localises to the membrane. Functionally, GTPase activator component of the RGS7-GNB5 complex that regulates G protein-coupled receptor signaling cascades. The RGS7-GNB5 complex acts as an inhibitor signal transduction by promoting the GTPase activity of G protein alpha subunits, such as GNAO1, thereby driving them into their inactive GDP-bound form. May play a role in synaptic vesicle exocytosis. Glycine-dependent regulation of the RGS7-GNB5 complex by GPR158 affects mood and cognition via its ability to regulate neuronal excitability in L2/L3 pyramidal neurons of the prefrontal cortex. Modulates the activity of potassium channels that are activated by GNAO1 in response to muscarinic acetylcholine receptor M2/CHRM2 signaling. This is Regulator of G-protein signaling 7 (RGS7) from Bos taurus (Bovine).